We begin with the raw amino-acid sequence, 432 residues long: Enolase (432 aa).

Gln-163 serves as a coordination point for (2R)-2-phosphoglycerate. Glu-205 (proton donor) is an active-site residue. Residues Asp-242, Glu-285, and Asp-312 each coordinate Mg(2+). The (2R)-2-phosphoglycerate site is built by Lys-337, Arg-366, Ser-367, and Lys-388. The active-site Proton acceptor is the Lys-337.

Belongs to the enolase family. It depends on Mg(2+) as a cofactor.

It localises to the cytoplasm. The protein resides in the secreted. Its subcellular location is the cell surface. The enzyme catalyses (2R)-2-phosphoglycerate = phosphoenolpyruvate + H2O. Its pathway is carbohydrate degradation; glycolysis; pyruvate from D-glyceraldehyde 3-phosphate: step 4/5. In terms of biological role, catalyzes the reversible conversion of 2-phosphoglycerate (2-PG) into phosphoenolpyruvate (PEP). It is essential for the degradation of carbohydrates via glycolysis. In Bifidobacterium longum (strain DJO10A), this protein is Enolase.